Reading from the N-terminus, the 510-residue chain is Bifunctional pantoate ligase/cytidylate kinase (510 aa).

The interval 1–276 (MNKIIIRKTE…CGKTRLIDHV (276 aa)) is pantoate--beta-alanine ligase. 29–36 (MGNLHDGH) is a binding site for ATP. Catalysis depends on H36, which acts as the Proton donor. Position 61 (Q61) interacts with (R)-pantoate. Q61 lines the beta-alanine pocket. Residue 150 to 153 (GEKD) participates in ATP binding. Position 156 (Q156) interacts with (R)-pantoate. 187–190 (FSSR) lines the ATP pocket. Residues 277-510 (FLMKRKPIIA…LNIPKEIQLE (234 aa)) are cytidylate kinase.

This sequence in the N-terminal section; belongs to the pantothenate synthetase family. In the C-terminal section; belongs to the cytidylate kinase family. Type 1 subfamily.

It localises to the cytoplasm. The enzyme catalyses (R)-pantoate + beta-alanine + ATP = (R)-pantothenate + AMP + diphosphate + H(+). It carries out the reaction CMP + ATP = CDP + ADP. The catalysed reaction is dCMP + ATP = dCDP + ADP. It participates in cofactor biosynthesis; (R)-pantothenate biosynthesis; (R)-pantothenate from (R)-pantoate and beta-alanine: step 1/1. Catalyzes the condensation of pantoate with beta-alanine in an ATP-dependent reaction via a pantoyl-adenylate intermediate. Functionally, catalyzes the transfer of a phosphate group from ATP to either CMP or dCMP to form CDP or dCDP and ADP, respectively. The polypeptide is Bifunctional pantoate ligase/cytidylate kinase (Prochlorococcus marinus subsp. pastoris (strain CCMP1986 / NIES-2087 / MED4)).